Reading from the N-terminus, the 142-residue chain is Large ribosomal subunit protein uL13 (142 aa).

Belongs to the universal ribosomal protein uL13 family. As to quaternary structure, part of the 50S ribosomal subunit.

In terms of biological role, this protein is one of the early assembly proteins of the 50S ribosomal subunit, although it is not seen to bind rRNA by itself. It is important during the early stages of 50S assembly. This Bordetella petrii (strain ATCC BAA-461 / DSM 12804 / CCUG 43448) protein is Large ribosomal subunit protein uL13.